We begin with the raw amino-acid sequence, 382 residues long: 3-dehydroquinate synthase (382 aa).

Residues 115-119, 139-140, lysine 152, and lysine 161 each bind NAD(+); these read GVVGD and TS. Zn(2+) is bound by residues glutamate 194, histidine 256, and histidine 274.

Belongs to the sugar phosphate cyclases superfamily. Dehydroquinate synthase family. Requires Co(2+) as cofactor. Zn(2+) serves as cofactor. The cofactor is NAD(+).

It is found in the cytoplasm. It catalyses the reaction 7-phospho-2-dehydro-3-deoxy-D-arabino-heptonate = 3-dehydroquinate + phosphate. Its pathway is metabolic intermediate biosynthesis; chorismate biosynthesis; chorismate from D-erythrose 4-phosphate and phosphoenolpyruvate: step 2/7. In terms of biological role, catalyzes the conversion of 3-deoxy-D-arabino-heptulosonate 7-phosphate (DAHP) to dehydroquinate (DHQ). The chain is 3-dehydroquinate synthase from Rhodopseudomonas palustris (strain BisB18).